Consider the following 520-residue polypeptide: Developmental regulatory protein wetA (520 aa).

Polar residues-rich tracts occupy residues 109–118 (TATHALSISP), 155–165 (QSFSPSLMRSS), and 378–392 (SSQKFDTSYTSSQVH). Disordered regions lie at residues 109–165 (TATH…MRSS), 378–454 (SSQK…SNKS), and 468–496 (KKILTGVAPSGSSKTKARREQEARDRRRK). The span at 420-429 (PTHRRTHSRK) shows a compositional bias: basic residues. Residues 445-454 (SSSSRGSNKS) show a composition bias toward low complexity.

The protein belongs to the wetA family.

Functionally, brlA, abaA and wetA are pivotal regulators of conidiophore development and conidium maturation. They act individually and together to regulate their own expression and that of numerous other sporulation-specific genes. This is Developmental regulatory protein wetA from Penicillium roqueforti (strain FM164).